A 354-amino-acid chain; its full sequence is Protein RecA (354 aa).

Position 65-72 (65-72 (GPESSGKT)) interacts with ATP.

The protein belongs to the RecA family.

Its subcellular location is the cytoplasm. Functionally, can catalyze the hydrolysis of ATP in the presence of single-stranded DNA, the ATP-dependent uptake of single-stranded DNA by duplex DNA, and the ATP-dependent hybridization of homologous single-stranded DNAs. It interacts with LexA causing its activation and leading to its autocatalytic cleavage. The sequence is that of Protein RecA from Pseudomonas syringae pv. syringae (strain B728a).